The sequence spans 161 residues: uncharacterized protein (161 aa).

The helical transmembrane segment at 30 to 50 (GVILFRLLGVILFRLLGVILF) threads the bilayer.

It is found in the membrane. This is an uncharacterized protein from Homo sapiens (Human).